A 172-amino-acid polypeptide reads, in one-letter code: Shikimate kinase (172 aa).

Residue 11 to 16 (GSGKTT) coordinates ATP. T15 serves as a coordination point for Mg(2+). The substrate site is built by D33, R57, and G79. R117 lines the ATP pocket. Position 136 (R136) interacts with substrate.

The protein belongs to the shikimate kinase family. As to quaternary structure, monomer. It depends on Mg(2+) as a cofactor.

It localises to the cytoplasm. It catalyses the reaction shikimate + ATP = 3-phosphoshikimate + ADP + H(+). Its pathway is metabolic intermediate biosynthesis; chorismate biosynthesis; chorismate from D-erythrose 4-phosphate and phosphoenolpyruvate: step 5/7. Its function is as follows. Catalyzes the specific phosphorylation of the 3-hydroxyl group of shikimic acid using ATP as a cosubstrate. The sequence is that of Shikimate kinase from Caldicellulosiruptor bescii (strain ATCC BAA-1888 / DSM 6725 / KCTC 15123 / Z-1320) (Anaerocellum thermophilum).